A 218-amino-acid chain; its full sequence is Adenylate kinase (218 aa).

10–15 (GAGKGT) is an ATP binding site. The NMP stretch occupies residues 30-59 (STGDMLRAAVKAGTPLGIEAKKVMDAGGLM). AMP contacts are provided by residues Thr31, Arg36, 57–59 (GLM), 85–88 (GYPR), and Gln92. An LID region spans residues 122–159 (GRWVHLASGRSYNTQSNPPKVAGQDDITGEALIQRDDD). ATP-binding positions include Arg123 and 132–133 (SY). Positions 156 and 167 each coordinate AMP. Gly203 is an ATP binding site.

This sequence belongs to the adenylate kinase family. As to quaternary structure, monomer.

The protein resides in the cytoplasm. It carries out the reaction AMP + ATP = 2 ADP. It functions in the pathway purine metabolism; AMP biosynthesis via salvage pathway; AMP from ADP: step 1/1. Catalyzes the reversible transfer of the terminal phosphate group between ATP and AMP. Plays an important role in cellular energy homeostasis and in adenine nucleotide metabolism. The sequence is that of Adenylate kinase from Bordetella avium (strain 197N).